A 214-amino-acid polypeptide reads, in one-letter code: Adenylate kinase (214 aa).

10-15 contacts ATP; sequence GAGKGT. The segment at 30-59 is NMP; that stretch reads STGDMLRAAIKAGTELGKQAKAVIDAGQLV. AMP is bound by residues Thr31, Arg36, 57–59, 85–88, and Gln92; these read QLV and GFPR. An LID region spans residues 122–159; sequence GRRAHLPSGRTYHVVYNPPKVEGKDDVTGEDLVVRDDD. Residues Arg123 and 132–133 contribute to the ATP site; that span reads TY. Positions 156 and 167 each coordinate AMP. Lys200 provides a ligand contact to ATP.

The protein belongs to the adenylate kinase family. As to quaternary structure, monomer.

The protein localises to the cytoplasm. It catalyses the reaction AMP + ATP = 2 ADP. It participates in purine metabolism; AMP biosynthesis via salvage pathway; AMP from ADP: step 1/1. Its function is as follows. Catalyzes the reversible transfer of the terminal phosphate group between ATP and AMP. Plays an important role in cellular energy homeostasis and in adenine nucleotide metabolism. The chain is Adenylate kinase from Vibrio campbellii (strain ATCC BAA-1116).